The sequence spans 472 residues: Trigger factor (472 aa).

One can recognise a PPIase FKBP-type domain in the interval 174-261 (GDIALVSFKG…LEDLKIKELP (88 aa)). The tract at residues 438–472 (EKTPEKARDQIKEKSSKKKTTKTNKEKKSSKTPKS) is disordered. Residues 439–451 (KTPEKARDQIKEK) are compositionally biased toward basic and acidic residues.

It belongs to the FKBP-type PPIase family. Tig subfamily.

The protein resides in the cytoplasm. It carries out the reaction [protein]-peptidylproline (omega=180) = [protein]-peptidylproline (omega=0). Its function is as follows. Involved in protein export. Acts as a chaperone by maintaining the newly synthesized protein in an open conformation. Functions as a peptidyl-prolyl cis-trans isomerase. The chain is Trigger factor from Prochlorococcus marinus (strain NATL2A).